The chain runs to 147 residues: Putative protein CLUHP3 (147 aa).

The disordered stretch occupies residues 14–47; the sequence is KEPEGGRRRLSHPGNMGWMRPSQETTPPDRSHHS.

The protein is Putative protein CLUHP3 (CLUHP3) of Homo sapiens (Human).